We begin with the raw amino-acid sequence, 393 residues long: S-adenosylmethionine sensor upstream of mTORC1 (393 aa).

Positions 1-35 (MDLRSSAETDPDLSENHPGSVPAELQSRKQEQEKL) are disordered. R94 is a binding site for S-adenosyl-L-methionine. The disordered stretch occupies residues 118–141 (DEKSARHATAGNANTDTNAPPQLS). Residues 125–136 (ATAGNANTDTNA) show a composition bias toward low complexity. S-adenosyl-L-methionine-binding residues include G160, D178, D190, F191, and S232. A disordered region spans residues 362–393 (ELPETPYDSDSGESQSSSAPFYELEDPILLQS).

Belongs to the BMT2/SAMTOR family. In terms of assembly, interacts with the GATOR1 complex; interaction is disrupted when samtor binds S-adenosyl-L-methionine. Interacts with the KICSTOR complex; interaction is disrupted when bmt2/samtor binds S-adenosyl-L-methionine.

S-adenosyl-L-methionine-binding protein that acts as an inhibitor of mTORC1 signaling via interaction with the GATOR1 and KICSTOR complexes. Acts as a sensor of S-adenosyl-L-methionine to signal methionine sufficiency to mTORC1: in presence of methionine, binds S-adenosyl-L-methionine, leading to disrupt interaction with the GATOR1 and KICSTOR complexes and promote mTORC1 signaling. Upon methionine starvation, S-adenosyl-L-methionine levels are reduced, thereby promoting the association with GATOR1 and KICSTOR, leading to inhibit mTORC1 signaling. Probably also acts as a S-adenosyl-L-methionine-dependent methyltransferase. The protein is S-adenosylmethionine sensor upstream of mTORC1 of Danio rerio (Zebrafish).